A 219-amino-acid chain; its full sequence is Proteasome subunit beta (219 aa).

The propeptide at 1-14 is removed in mature form; by autocatalysis; the sequence is MISNSEYHKEYMKG. Thr-15 acts as the Nucleophile in catalysis.

This sequence belongs to the peptidase T1B family. The 20S proteasome core is composed of 14 alpha and 14 beta subunits that assemble into four stacked heptameric rings, resulting in a barrel-shaped structure. The two inner rings, each composed of seven catalytic beta subunits, are sandwiched by two outer rings, each composed of seven alpha subunits. The catalytic chamber with the active sites is on the inside of the barrel. Has a gated structure, the ends of the cylinder being occluded by the N-termini of the alpha-subunits. Is capped at one or both ends by the proteasome regulatory ATPase, PAN.

The protein resides in the cytoplasm. It catalyses the reaction Cleavage of peptide bonds with very broad specificity.. With respect to regulation, the formation of the proteasomal ATPase PAN-20S proteasome complex, via the docking of the C-termini of PAN into the intersubunit pockets in the alpha-rings, triggers opening of the gate for substrate entry. Interconversion between the open-gate and close-gate conformations leads to a dynamic regulation of the 20S proteasome proteolysis activity. Functionally, component of the proteasome core, a large protease complex with broad specificity involved in protein degradation. The sequence is that of Proteasome subunit beta from Methanococcus maripaludis (strain C5 / ATCC BAA-1333).